A 494-amino-acid chain; its full sequence is 2,3-bisphosphoglycerate-independent phosphoglycerate mutase (494 aa).

The Mn(2+) site is built by Asp12 and Ser62. Ser62 functions as the Phosphoserine intermediate in the catalytic mechanism. Residues His121, 150-151 (RD), Arg181, Arg187, 252-255 (RSDR), and Lys317 each bind substrate. Residues Asp384, His388, Asp425, His426, and His443 each coordinate Mn(2+).

This sequence belongs to the BPG-independent phosphoglycerate mutase family. Monomer. Mn(2+) is required as a cofactor.

It catalyses the reaction (2R)-2-phosphoglycerate = (2R)-3-phosphoglycerate. The protein operates within carbohydrate degradation; glycolysis; pyruvate from D-glyceraldehyde 3-phosphate: step 3/5. Catalyzes the interconversion of 2-phosphoglycerate and 3-phosphoglycerate. The chain is 2,3-bisphosphoglycerate-independent phosphoglycerate mutase from Anaplasma marginale (strain St. Maries).